The sequence spans 538 residues: Low affinity inorganic phosphate transporter 3 (538 aa).

The Cytoplasmic portion of the chain corresponds to 1–24 (MAKDQLQVLNALDVAKTQLYHFTA). A helical transmembrane segment spans residues 25–45 (IVIAGMGFFTDAYDLFCISLV). Residues 46–70 (TKLLGRIYYFHEGAPKPGILPSGIS) are Extracellular-facing. The chain crosses the membrane as a helical span at residues 71 to 91 (AAVNGVAFIGTLSGQLFFGWL). At 92–99 (GDKLGRKK) the chain is on the cytoplasmic side. Residues 100–120 (VYGMTLMLMVICSIACGLSFG) traverse the membrane as a helical segment. The Extracellular segment spans residues 121–122 (KT). Residues 123–143 (ANGVIATLCFFRFWLGFGIGG) traverse the membrane as a helical segment. Over 144-164 (DYPLSATIMSEYANKKTRGAF) the chain is Cytoplasmic. A helical transmembrane segment spans residues 165 to 185 (IAAVFAMQGFGILAGGIVALI). Topologically, residues 186–211 (VSAGFKNAYPAPTYSAHGKDSTPPEA) are extracellular. Residues 212–232 (DYVWRIIVMIGALPALLTYYW) traverse the membrane as a helical segment. The Cytoplasmic segment spans residues 233 to 292 (RMKMPETARYTALVAKNTVKAAADMSKVLNVEIEEDKATVEKIEENGNSFGLFSKEFLRR). A helical membrane pass occupies residues 293-313 (HGLHLLGTTSTWFLLDIAFYS). Topologically, residues 314-345 (QNLFQKDIFSKIGWIPPPETMNALDEVFRIAR) are extracellular. A helical membrane pass occupies residues 346–366 (AQTLIALCSTVPGYWFTVAFI). The Cytoplasmic segment spans residues 367–371 (DKMGR). Residues 372–392 (FAIQLMGSFFMTVFMFALAIP) form a helical membrane-spanning segment. Over 393–402 (YDHWTKKENR) the chain is Extracellular. Residues 403 to 423 (IGFVIMYSLTFFFANFGPNAT) form a helical membrane-spanning segment. The Cytoplasmic segment spans residues 424 to 442 (TFVVPAEIFPARLRSTCHG). A helical membrane pass occupies residues 443–463 (ISAAAGKAGAIVGAFGFLYAA). Over 464 to 483 (QSTDPKKVDAGYPTGIGVKN) the chain is Extracellular. A helical transmembrane segment spans residues 484-504 (ALIVLGCVNFLGMLSTLLVPE). Topologically, residues 505 to 538 (SKGKSLEEMSKENEGEEENYGTETKGENAQTVPV) are cytoplasmic. A compositionally biased stretch (basic and acidic residues) spans 506 to 517 (KGKSLEEMSKEN). Residues 506–538 (KGKSLEEMSKENEGEEENYGTETKGENAQTVPV) form a disordered region.

Belongs to the major facilitator superfamily. Phosphate:H(+) symporter (TC 2.A.1.9) family. In terms of tissue distribution, expressed at low levels in non-mycorrhized roots.

The protein localises to the cell membrane. It catalyses the reaction phosphate(in) + H(+)(in) = phosphate(out) + H(+)(out). Its function is as follows. Low-affinity transporter for external inorganic phosphate (Pi) probably involved in the acquisition of phosphate released by arbuscular mycorrhizal (AM) fungi during AM symbiosis. The protein is Low affinity inorganic phosphate transporter 3 of Petunia hybrida (Petunia).